A 222-amino-acid polypeptide reads, in one-letter code: UPF0758 protein Cag_1513 (222 aa).

The MPN domain occupies 100–222 (KIMAAGDVFE…WYSFRERGLL (123 aa)). 3 residues coordinate Zn(2+): His-171, His-173, and Asp-184. The JAMM motif signature appears at 171 to 184 (HNHPSGDVNPSNAD).

Belongs to the UPF0758 family.

The sequence is that of UPF0758 protein Cag_1513 from Chlorobium chlorochromatii (strain CaD3).